Consider the following 516-residue polypeptide: Endo-acting ulvan lyase (516 aa).

A signal peptide spans 1-24 (MLEKTTLKNIILIHFLMFLAVVTA). C38 and C65 are oxidised to a cystine. G42, N44, D62, S64, A67, and N68 together coordinate Ca(2+). Y138 is a substrate binding site. Residue K143 is the Proton acceptor of the active site. Residues 191–195 (EGDGR) and 260–263 (YRVK) contribute to the substrate site. The active-site Proton donor/acceptor is Y260. The tract at residues 289-429 (PIGDVYKLKN…VWKAIAVESL (141 aa)) is ulvan-binding domain. The propeptide at 430-516 (SVDENAILAS…NKYHKKLIVK (87 aa)) is removed by the type IX secretion system (T9SS).

It belongs to the polysaccharide lyase 28 family. It depends on Ca(2+) as a cofactor.

The protein resides in the secreted. Ulvan lyase involved in ulvan degradation. Ulvan is the main polysaccharide component of the Ulvales (green seaweed) cell wall. It is composed of disaccharide building blocks comprising 3-sulfated rhamnose (Rha3S) linked to D-glucuronic acid (GlcA), L-iduronic acid (IduA), or D-xylose (Xyl). Ulvan lyase catalyzes the endolytic cleavage of the glycosidic bond between Rha3S and the uronic acids GlcA or IduA, producing oligosaccharides that have unsaturated 4-deoxy-L-threo-hex-4-enopyranosiduronic acid (deltaUA) at the non-reducing end. This results eventually in the degradation of the ulvan polysaccharide into deltaUA-Rha3S disaccharides and deltaUA-Rha3S-Xyl-Rha3S tetrasaccharides. The polypeptide is Endo-acting ulvan lyase (Formosa agariphila (strain DSM 15362 / KCTC 12365 / LMG 23005 / KMM 3901 / M-2Alg 35-1)).